Reading from the N-terminus, the 192-residue chain is Pyridoxal 5'-phosphate synthase subunit PdxT (192 aa).

46 to 48 lines the L-glutamine pocket; that stretch reads GES. Cysteine 76 functions as the Nucleophile in the catalytic mechanism. L-glutamine is bound by residues arginine 103 and 131 to 132; that span reads IR. Residues histidine 167 and glutamate 169 each act as charge relay system in the active site.

This sequence belongs to the glutaminase PdxT/SNO family. In the presence of PdxS, forms a dodecamer of heterodimers. Only shows activity in the heterodimer.

The enzyme catalyses aldehydo-D-ribose 5-phosphate + D-glyceraldehyde 3-phosphate + L-glutamine = pyridoxal 5'-phosphate + L-glutamate + phosphate + 3 H2O + H(+). The catalysed reaction is L-glutamine + H2O = L-glutamate + NH4(+). It participates in cofactor biosynthesis; pyridoxal 5'-phosphate biosynthesis. Functionally, catalyzes the hydrolysis of glutamine to glutamate and ammonia as part of the biosynthesis of pyridoxal 5'-phosphate. The resulting ammonia molecule is channeled to the active site of PdxS. In Koribacter versatilis (strain Ellin345), this protein is Pyridoxal 5'-phosphate synthase subunit PdxT.